The primary structure comprises 127 residues: Protein chibby homolog 1 (127 aa).

Residues 1–25 form a disordered region; it reads MPLFGSIFSPKKTPPRKSASLSNLH. Residues Ser-9 and Ser-20 each carry the phosphoserine modification. The segment at 60 to 112 is minimal region for the interaction with PKD2; that stretch reads VADSVISGGVDRRETQRLRKRNQQLEEENNLLRLKVDILLDMLSETTAESHLK. Residues 68 to 110 are a coiled coil; the sequence is GVDRRETQRLRKRNQQLEEENNLLRLKVDILLDMLSETTAESH. The leucine-zipper; mediates homodimerization stretch occupies residues 77–98; sequence LRKRNQQLEEENNLLRLKVDIL.

Belongs to the chibby family. Homodimer. Homodimerization is essential for nuclear localization and interaction with KPNA4 but is dispensable for interaction with CTNNB1. Interacts with polycystin-2/PKD2 and GM130. Interacts with the C-terminal region of CTNNB1. Interacts (C-terminus) with TCIM (C-terminus), TCIM competes with CTNNB1 for the interaction with CBY1. Interacts with FAM92A; this interaction facilitates targeting of FAM92A to cilium basal body. Interacts with CIBAR2. Interacts with KPNA4.

The protein localises to the nucleus speckle. The protein resides in the cytoplasm. Its subcellular location is the cytoskeleton. It localises to the cilium basal body. It is found in the microtubule organizing center. The protein localises to the centrosome. The protein resides in the centriole. Its subcellular location is the golgi apparatus. It localises to the trans-Golgi network. It is found in the cell projection. The protein localises to the cilium. The protein resides in the flagellum. Its subcellular location is the nucleus. Inhibits the Wnt/Wingless pathway by binding to CTNNB1/beta-catenin and inhibiting beta-catenin-mediated transcriptional activation through competition with TCF/LEF transcription factors. Has also been shown to play a role in regulating the intracellular trafficking of polycystin-2/PKD2 and possibly of other intracellular proteins. Promotes adipocyte and cardiomyocyte differentiation. The polypeptide is Protein chibby homolog 1 (Cby1) (Rattus norvegicus (Rat)).